We begin with the raw amino-acid sequence, 150 residues long: Large ribosomal subunit protein bL9 (150 aa).

It belongs to the bacterial ribosomal protein bL9 family.

Binds to the 23S rRNA. The sequence is that of Large ribosomal subunit protein bL9 from Halorhodospira halophila (strain DSM 244 / SL1) (Ectothiorhodospira halophila (strain DSM 244 / SL1)).